The following is a 152-amino-acid chain: Superoxide dismutase [Cu-Zn] (152 aa).

3 residues coordinate Cu cation: His45, His47, and His62. Cys56 and Cys145 are joined by a disulfide. Residues His62, His70, His79, and Asp82 each contribute to the Zn(2+) site. His119 contributes to the Cu cation binding site.

The protein belongs to the Cu-Zn superoxide dismutase family. Homodimer. Cu cation is required as a cofactor. Requires Zn(2+) as cofactor.

The protein localises to the cytoplasm. It carries out the reaction 2 superoxide + 2 H(+) = H2O2 + O2. Its function is as follows. Destroys radicals which are normally produced within the cells and which are toxic to biological systems. The chain is Superoxide dismutase [Cu-Zn] (SODCC) from Zantedeschia aethiopica (White calla lily).